A 206-amino-acid polypeptide reads, in one-letter code: MGSETTAAGDALDALDWNKGDGLLPVIVQDADNLRVLMLGYMNAEALAVTRARGEVTFFSRSKQRLWTKGESSGNVLRVVAIETDCDADTLLVQARPHGPTCHLGRTSCFPTAPSQFLGSLDALIAEREHERPHGSYTTKLFEQGIRRIAQKVGEEGVETALAGVVQGDAELLGESADLLYHLIVLLRARGLGLGDAVALLESRHK.

Positions 1-117 (MGSETTAAGD…SCFPTAPSQF (117 aa)) are phosphoribosyl-AMP cyclohydrolase. The segment at 118-206 (LGSLDALIAE…AVALLESRHK (89 aa)) is phosphoribosyl-ATP pyrophosphohydrolase.

It in the N-terminal section; belongs to the PRA-CH family. The protein in the C-terminal section; belongs to the PRA-PH family.

The protein localises to the cytoplasm. It catalyses the reaction 1-(5-phospho-beta-D-ribosyl)-ATP + H2O = 1-(5-phospho-beta-D-ribosyl)-5'-AMP + diphosphate + H(+). The catalysed reaction is 1-(5-phospho-beta-D-ribosyl)-5'-AMP + H2O = 1-(5-phospho-beta-D-ribosyl)-5-[(5-phospho-beta-D-ribosylamino)methylideneamino]imidazole-4-carboxamide. Its pathway is amino-acid biosynthesis; L-histidine biosynthesis; L-histidine from 5-phospho-alpha-D-ribose 1-diphosphate: step 2/9. It participates in amino-acid biosynthesis; L-histidine biosynthesis; L-histidine from 5-phospho-alpha-D-ribose 1-diphosphate: step 3/9. The chain is Histidine biosynthesis bifunctional protein HisIE from Xanthomonas campestris pv. campestris (strain ATCC 33913 / DSM 3586 / NCPPB 528 / LMG 568 / P 25).